The primary structure comprises 201 residues: Fas apoptotic inhibitory molecule 1 (201 aa).

The protein belongs to the FAIM1 family.

It is found in the cytoplasm. Its function is as follows. Plays a role as an inducible effector molecule that mediates Fas resistance produced by surface Ig engagement in B cells. The sequence is that of Fas apoptotic inhibitory molecule 1 (Faim) from Rattus norvegicus (Rat).